We begin with the raw amino-acid sequence, 179 residues long: Ribosome-recycling factor (179 aa).

Belongs to the RRF family.

The protein localises to the cytoplasm. Responsible for the release of ribosomes from messenger RNA at the termination of protein biosynthesis. May increase the efficiency of translation by recycling ribosomes from one round of translation to another. In Chlamydia muridarum (strain MoPn / Nigg), this protein is Ribosome-recycling factor.